Reading from the N-terminus, the 182-residue chain is ADP-ribosylation factor-like protein 3 (182 aa).

A lipid anchor (N-myristoyl glycine) is attached at Gly-2. Ser-5 carries the phosphoserine modification. Residues 24-31, Thr-48, 67-71, Gly-70, 126-129, and 159-161 each bind GTP; these read GLDNAGKT, DIGGQ, NKQD, and SAL. The Mg(2+) site is built by Thr-31 and Thr-48.

This sequence belongs to the small GTPase superfamily. Arf family. As to quaternary structure, found in a complex with ARL3, RP2 and UNC119 (or UNC119B); RP2 induces hydrolysis of GTP ARL3 in the complex, leading to the release of UNC119 (or UNC119B). Interacts with RP2; interaction is direct and stimulated with the activated GTP-bound form of ARL3. Interacts with SYS1. Interacts with ARL2BP; the GTP-bound form interacts with ARL2BP. Microtubule-associated protein. Does not interact with TBCC. Interacts with RP2. Interacts with PDE6D; the interaction occurs specifically with the GTP-bound form of ARL3. Interacts with GGA1; the interaction recruits PKD1:PKD2 complex to trans-Golgi network and is required for ciliary targeting of PKD1:PKD2 complex. Interacts with DNAAF9.

It is found in the golgi apparatus membrane. Its subcellular location is the cytoplasm. The protein resides in the cytoskeleton. It localises to the spindle. The protein localises to the nucleus. It is found in the microtubule organizing center. Its subcellular location is the centrosome. The protein resides in the cell projection. It localises to the cilium. In terms of biological role, small GTP-binding protein which cycles between an inactive GDP-bound and an active GTP-bound form, and the rate of cycling is regulated by guanine nucleotide exchange factors (GEF) and GTPase-activating proteins (GAP). Required for normal cytokinesis and cilia signaling. Requires assistance from GTPase-activating proteins (GAPs) like RP2 and PDE6D, in order to cycle between inactive GDP-bound and active GTP-bound forms. Required for targeting proteins to the cilium, including myristoylated NPHP3 and prenylated INPP5E. Targets NPHP3 to the ciliary membrane by releasing myristoylated NPHP3 from UNC119B cargo adapter into the cilium. Required for PKD1:PKD2 complex targeting from the trans-Golgi network to the cilium. The sequence is that of ADP-ribosylation factor-like protein 3 (ARL3) from Sus scrofa (Pig).